A 375-amino-acid polypeptide reads, in one-letter code: Alanine racemase (375 aa).

Residue K35 is the Proton acceptor; specific for D-alanine of the active site. K35 is subject to N6-(pyridoxal phosphate)lysine. R130 contributes to the substrate binding site. Residue Y253 is the Proton acceptor; specific for L-alanine of the active site. A substrate-binding site is contributed by M305.

Belongs to the alanine racemase family. The cofactor is pyridoxal 5'-phosphate.

It carries out the reaction L-alanine = D-alanine. It functions in the pathway amino-acid biosynthesis; D-alanine biosynthesis; D-alanine from L-alanine: step 1/1. Functionally, catalyzes the interconversion of L-alanine and D-alanine. May also act on other amino acids. This is Alanine racemase (alr) from Ralstonia nicotianae (strain ATCC BAA-1114 / GMI1000) (Ralstonia solanacearum).